Reading from the N-terminus, the 831-residue chain is Prolactin receptor (831 aa).

An N-terminal signal peptide occupies residues 1–23; that stretch reads MKQDLISSVQIILFLPLTTVGLA. Over 24–438 the chain is Extracellular; the sequence is GQSFPGKPKI…QIPNDFRVKD (415 aa). Fibronectin type-III domains follow at residues 30 to 128, 129 to 227, 230 to 331, and 332 to 433; these read KPKI…VQPG, SPVN…IPSG, PPEK…VQPD, and PPVN…IPND. A disulfide bond links Cys36 and Cys46. The N-linked (GlcNAc...) asparagine glycan is linked to Asn59. Cys75 and Cys86 are joined by a disulfide. N-linked (GlcNAc...) asparagine glycosylation is found at Asn91, Asn100, Asn112, Asn132, Asn262, Asn303, Asn315, and Asn335. Residues Asp414 and His416 each contribute to the Zn(2+) site. The WSXWS motif motif lies at 419–423; it reads WSEWS. Residues 439-459 traverse the membrane as a helical segment; the sequence is MIVWIVLGVLSSLICLIMSWT. At 460–831 the chain is on the cytoplasmic side; that stretch reads MVLKGYRMIT…DPSSFMPSFK (372 aa). The Box 1 motif signature appears at 471–479; sequence MLPPVPGPK. Disordered stretches follow at residues 527-563, 774-796, and 808-831; these read QQLM…SPSL, RVPH…QQGQ, and PSDC…PSFK. The segment covering 787 to 796 has biased composition (polar residues); sequence ETSQSLQQGQ.

It belongs to the type I cytokine receptor family. Type 1 subfamily.

Its subcellular location is the membrane. In terms of biological role, this is a receptor for the anterior pituitary hormone prolactin. This Gallus gallus (Chicken) protein is Prolactin receptor (PRLR).